Reading from the N-terminus, the 326-residue chain is tRNA(Ile)-lysidine synthase (326 aa).

ATP is bound at residue 25–30 (SGGQDS).

This sequence belongs to the tRNA(Ile)-lysidine synthase family.

Its subcellular location is the cytoplasm. The catalysed reaction is cytidine(34) in tRNA(Ile2) + L-lysine + ATP = lysidine(34) in tRNA(Ile2) + AMP + diphosphate + H(+). Its function is as follows. Ligates lysine onto the cytidine present at position 34 of the AUA codon-specific tRNA(Ile) that contains the anticodon CAU, in an ATP-dependent manner. Cytidine is converted to lysidine, thus changing the amino acid specificity of the tRNA from methionine to isoleucine. This Prochlorococcus marinus (strain NATL1A) protein is tRNA(Ile)-lysidine synthase.